Consider the following 173-residue polypeptide: Crossover junction endodeoxyribonuclease RuvC (173 aa).

Active-site residues include aspartate 8, glutamate 67, and aspartate 139. Positions 8, 67, and 139 each coordinate Mg(2+).

It belongs to the RuvC family. As to quaternary structure, homodimer which binds Holliday junction (HJ) DNA. The HJ becomes 2-fold symmetrical on binding to RuvC with unstacked arms; it has a different conformation from HJ DNA in complex with RuvA. In the full resolvosome a probable DNA-RuvA(4)-RuvB(12)-RuvC(2) complex forms which resolves the HJ. Requires Mg(2+) as cofactor.

Its subcellular location is the cytoplasm. The catalysed reaction is Endonucleolytic cleavage at a junction such as a reciprocal single-stranded crossover between two homologous DNA duplexes (Holliday junction).. In terms of biological role, the RuvA-RuvB-RuvC complex processes Holliday junction (HJ) DNA during genetic recombination and DNA repair. Endonuclease that resolves HJ intermediates. Cleaves cruciform DNA by making single-stranded nicks across the HJ at symmetrical positions within the homologous arms, yielding a 5'-phosphate and a 3'-hydroxyl group; requires a central core of homology in the junction. The consensus cleavage sequence is 5'-(A/T)TT(C/G)-3'. Cleavage occurs on the 3'-side of the TT dinucleotide at the point of strand exchange. HJ branch migration catalyzed by RuvA-RuvB allows RuvC to scan DNA until it finds its consensus sequence, where it cleaves and resolves the cruciform DNA. This is Crossover junction endodeoxyribonuclease RuvC from Psychromonas ingrahamii (strain DSM 17664 / CCUG 51855 / 37).